Consider the following 142-residue polypeptide: MEFLYNLHSGWHVDQAIVTEEERLVVVRFGRTADRECMLMDEMLASVAEKVRNFVAIYLCDIDEVPDFNDMYELNDNMCLMFFYKNKHMMCDFGTGNNNKMNFLPDDKQELIDIMETIFRGARKNKGIVVSPYDYNHKRPSD.

The protein belongs to the DIM1 family. Component of the 25S [U4/U6.U5] tri-snRNP.

The protein localises to the nucleus. In terms of biological role, essential role in pre-mRNA splicing. Also essential for entry into mitosis (G2/M progression) as well as for chromosome segregation during mitosis. In Candida glabrata (strain ATCC 2001 / BCRC 20586 / JCM 3761 / NBRC 0622 / NRRL Y-65 / CBS 138) (Yeast), this protein is Spliceosomal protein DIB1 (DIB1).